The primary structure comprises 198 residues: Recombination protein RecR (198 aa).

The C4-type zinc finger occupies Cys-57–Cys-72. In terms of domain architecture, Toprim spans Ser-80 to Pro-175.

This sequence belongs to the RecR family.

Its function is as follows. May play a role in DNA repair. It seems to be involved in an RecBC-independent recombinational process of DNA repair. It may act with RecF and RecO. In Brevibacillus brevis (strain 47 / JCM 6285 / NBRC 100599), this protein is Recombination protein RecR.